Reading from the N-terminus, the 212-residue chain is MKENIEEAVKKAVSEAPPRGFKESVDLAINLHNIDLTQPGNRVDTEVILPHGRGRPNRIAVFAAGDTALKAKAAGADYVISPEELKLLGENRKNARKLADEYDFFIAETQFMPVIGKTLGPILGKRGKMPTPLPPNADVAQMISRLKNIVRIRSRDRPTFHIAVGRRDMDARQLAENIESVITKLEQTLKDGRRNLKSVYVKTTMGPAVRVI.

The protein belongs to the universal ribosomal protein uL1 family. As to quaternary structure, part of the 50S ribosomal subunit.

Functionally, binds directly to 23S rRNA. Probably involved in E site tRNA release. In terms of biological role, protein L1 is also a translational repressor protein, it controls the translation of its operon by binding to its mRNA. This chain is Large ribosomal subunit protein uL1, found in Methanothrix thermoacetophila (strain DSM 6194 / JCM 14653 / NBRC 101360 / PT) (Methanosaeta thermophila).